The primary structure comprises 182 residues: ATP synthase subunit delta (182 aa).

This sequence belongs to the ATPase delta chain family. F-type ATPases have 2 components, F(1) - the catalytic core - and F(0) - the membrane proton channel. F(1) has five subunits: alpha(3), beta(3), gamma(1), delta(1), epsilon(1). F(0) has three main subunits: a(1), b(2) and c(10-14). The alpha and beta chains form an alternating ring which encloses part of the gamma chain. F(1) is attached to F(0) by a central stalk formed by the gamma and epsilon chains, while a peripheral stalk is formed by the delta and b chains.

It localises to the cell inner membrane. F(1)F(0) ATP synthase produces ATP from ADP in the presence of a proton or sodium gradient. F-type ATPases consist of two structural domains, F(1) containing the extramembraneous catalytic core and F(0) containing the membrane proton channel, linked together by a central stalk and a peripheral stalk. During catalysis, ATP synthesis in the catalytic domain of F(1) is coupled via a rotary mechanism of the central stalk subunits to proton translocation. Its function is as follows. This protein is part of the stalk that links CF(0) to CF(1). It either transmits conformational changes from CF(0) to CF(1) or is implicated in proton conduction. The polypeptide is ATP synthase subunit delta (Hydrogenobaculum sp. (strain Y04AAS1)).